Here is a 203-residue protein sequence, read N- to C-terminus: B-cell CLL/lymphoma 7 protein family member B-A (203 aa).

2 disordered regions span residues 55-80 and 94-148; these read KEKEKSKVSVGGEMQRKNFPSEESSD and SNQS…EIME. Residues 109 to 129 show a composition bias toward low complexity; sequence ADSSNNSSPPASEPVSPAPQS.

Belongs to the BCL7 family.

This is B-cell CLL/lymphoma 7 protein family member B-A (bcl7ba) from Danio rerio (Zebrafish).